A 428-amino-acid polypeptide reads, in one-letter code: uncharacterized protein (428 aa).

One can recognise a Glutaredoxin domain in the interval K241 to E351. The segment covering E386–V401 has biased composition (acidic residues). The disordered stretch occupies residues E386–R405.

This is an uncharacterized protein from Arabidopsis thaliana (Mouse-ear cress).